The chain runs to 479 residues: Sucrose-6-phosphate hydrolase (479 aa).

Residues 44–47 (LLND), Gln63, 106–107 (YS), 166–167 (RD), and Glu223 each bind substrate. Residue Asp47 is part of the active site.

Belongs to the glycosyl hydrolase 32 family.

The protein localises to the cytoplasm. The catalysed reaction is Hydrolysis of terminal non-reducing beta-D-fructofuranoside residues in beta-D-fructofuranosides.. It participates in glycan biosynthesis; sucrose metabolism. The chain is Sucrose-6-phosphate hydrolase (scrB) from Streptococcus mutans serotype c (strain ATCC 700610 / UA159).